Consider the following 351-residue polypeptide: Paired box protein 2 homolog (351 aa).

Residues 91–217 (SHTGVNQLGG…SSINRIVRNK (127 aa)) constitute a DNA-binding region (paired). The segment at 94–150 (GVNQLGGVFVNGRPLPDTIRAQIVEMSQHGTRPCDISRQLKVSHGCVSKILGRYYST) is PAI subdomain. Residues 169 to 217 (RVVECIAGYKRANPTMFAWEIRQKLIEDQICGEENVPSVSSINRIVRNK) form an RED subdomain region. Residues 226–246 (PTSVTPSVARPSSATSQNQRS) are compositionally biased toward polar residues. The segment at 226-258 (PTSVTPSVARPSSATSQNQRSPPRGVQQHMQQS) is disordered.

It is found in the nucleus. The protein resides in the chromosome. Functionally, transcription factor. Involved in negatively modulating apoptosis in germline and somatic cells, acting in partial redundancy with transcription factor egl-38/PAX5, probably by directly regulating transcription of apoptosis regulator ced-9. May bind to the DNA sequence motif 5'-GTAACG-3' in regulatory elements. This Caenorhabditis elegans protein is Paired box protein 2 homolog.